We begin with the raw amino-acid sequence, 270 residues long: Alpha N-terminal protein methyltransferase 1 (270 aa).

S-adenosyl-L-methionine-binding positions include G114, R119, 137 to 139 (EQN), 165 to 166 (LQ), and Q180.

This sequence belongs to the methyltransferase superfamily. NTM1 family.

It carries out the reaction N-terminal L-alanyl-L-prolyl-L-lysyl-[protein] + 3 S-adenosyl-L-methionine = N-terminal N,N,N-trimethyl-L-alanyl-L-prolyl-L-lysyl-[protein] + 3 S-adenosyl-L-homocysteine + 3 H(+). It catalyses the reaction N-terminal L-seryl-L-prolyl-L-lysyl-[protein] + 3 S-adenosyl-L-methionine = N-terminal N,N,N-trimethyl-L-seryl-L-prolyl-L-lysyl-[protein] + 3 S-adenosyl-L-homocysteine + 3 H(+). The catalysed reaction is N-terminal L-prolyl-L-prolyl-L-lysyl-[protein] + 2 S-adenosyl-L-methionine = N-terminal N,N-dimethyl-L-prolyl-L-prolyl-L-lysyl-[protein] + 2 S-adenosyl-L-homocysteine + 2 H(+). In terms of biological role, alpha-N-methyltransferase that methylates the N-terminus of target proteins containing the N-terminal motif [Ala/Pro/Ser]-Pro-Lys when the initiator Met is cleaved. Specifically catalyzes mono-, di- or tri-methylation of exposed alpha-amino group of Ala or Ser residue in the [Ala/Ser]-Pro-Lys motif and mono- or di-methylation of Pro in the Pro-Pro-Lys motif. In Dictyostelium discoideum (Social amoeba), this protein is Alpha N-terminal protein methyltransferase 1.